The chain runs to 927 residues: MEDPVQLKEEGNKYFQSNEYGQAIQCYSKALKLITDKKMQAVLYRNRSACYLKQDNYVQAAADASKAIDVDASDIKALFRRCQALEKLGKLDQAYKDVQRCATLEPKNRTFLETLHRLGTNIQEKLHVQFSTDSRVHKMFEILLDKNSEKEKREKAANNLIVLGREDAGAEQIFQNNGVNLLMQLIESKDPEMILSAIRTLSGMCTGHRARATAIVHLVGINKICSIMAVDNEEIALAACNLLQNIVDSLTGEDKKAHGKQEALVLDTKKDLKIITTHLLDMLVSKKVSGHGRDQALNLLNKNIPRYDLKNKDNSKSLFVVDAGLKKILKVLGQVPELPNCLPLTPNTRLNASVLVNKLYDDLRCDPERDNFRIICEEYITGSFDPKDMEKNLHAIQTVSGILQGPFDLGNKLLSLQGVMEMMVALTGSENEVDQLVAVEALIHASTKLSRASFIITNGVSLLKDIYKKTKNEKIKIRALVGLCKLGSAGGTDYALRQFAEGSTDKLAKQCRKWLCNPSLDIQTRKWAVEGLAYLTLDADVKDEFVEDEQSLKAMFELSKTSDKTILYSVATTLVNCTNSYDVKEVIPEMVQLAKFSKQHVPEQHPKDKKDFVEKRVKRLLKADVISALSCMVKADNSILTDQTKEQLSRVFLALCEDPKDRGIIVAQGGGKAMIPLALEGTDVGKIKASHGLAKIAAVSNPDIAFPGERVYEVVRPLVSLLNTERDGIQNFEALLALTNLSGKNDKLRQKIIKEKALPEIENYMFENHEQIRQAATECMCNLALNKEVKERFMAEGNDRLKLIILLCGEEDEVKLQRAAAGTLAMLTGAEKKLCHKMTEVTTQWMEILQRLCLSEDLQVQHRGVVIAYNLINADKELAKKLVESEMLEILTVIGKQADVPNKQHIINAAREALVKCLDYGFIKTVS.

3 TPR repeats span residues Pro-4–Lys-37, Ala-41–Asp-74, and Lys-76–Asn-108. ARM repeat units follow at residues Asp-167–Thr-206, Arg-209–Asp-248, and Asp-746–Leu-785.

In terms of tissue distribution, detected initially throughout the somites and the heart and gradually also expressed in the jaw, branchial arches and body wall muscles at later embryonic stages.

Its subcellular location is the cytoplasm. It is found in the myofibril. The protein localises to the sarcomere. The protein resides in the z line. It localises to the a band. Its subcellular location is the perinuclear region. It is found in the cytosol. Its function is as follows. Acts as a co-chaperone for HSP90 and is required for proper folding of the myosin motor domain. Plays a role in sarcomere formation during muscle cell development. Is necessary for normal early lens development. This Xenopus tropicalis (Western clawed frog) protein is Protein unc-45 homolog B.